Reading from the N-terminus, the 154-residue chain is RxLR effector protein PexRD24 (154 aa).

An N-terminal signal peptide occupies residues 1–22; the sequence is MHSSLLWLGAVVALLAVNNVTA. The RxLR-dEER signature appears at 53–67; the sequence is RSLRAVETSEDEEER. Residue lysine 138 is a short sequence motif, PP1c-binding motif.

The protein belongs to the RxLR effector family. In terms of assembly, interacts with the potato PP1c family proteins PP1c-1, PP1c-2 and PP1c-3.

It is found in the secreted. It localises to the host nucleus. The protein resides in the host nucleoplasm. The protein localises to the host nucleolus. In terms of biological role, effector that interacts with isoforms of host protein phosphatase type 1c (PP1c), mimicking a regulatory subunit and causing their re-localization within the host nucleus. The holoenzymes formed with PP1c isoforms act to promote late blight by attenuating jasmonic acid (JA)- and salicylic acid (SA)-mediated transcriptional responses of the host plant. In Phytophthora infestans (strain T30-4) (Potato late blight agent), this protein is RxLR effector protein PexRD24.